A 232-amino-acid chain; its full sequence is Phosphatidylserine decarboxylase proenzyme (232 aa).

S190 functions as the Schiff-base intermediate with substrate; via pyruvic acid in the catalytic mechanism. Pyruvic acid (Ser); by autocatalysis is present on S190.

It belongs to the phosphatidylserine decarboxylase family. PSD-A subfamily. As to quaternary structure, heterodimer of a large membrane-associated beta subunit and a small pyruvoyl-containing alpha subunit. It depends on pyruvate as a cofactor. Post-translationally, is synthesized initially as an inactive proenzyme. Formation of the active enzyme involves a self-maturation process in which the active site pyruvoyl group is generated from an internal serine residue via an autocatalytic post-translational modification. Two non-identical subunits are generated from the proenzyme in this reaction, and the pyruvate is formed at the N-terminus of the alpha chain, which is derived from the carboxyl end of the proenzyme. The post-translation cleavage follows an unusual pathway, termed non-hydrolytic serinolysis, in which the side chain hydroxyl group of the serine supplies its oxygen atom to form the C-terminus of the beta chain, while the remainder of the serine residue undergoes an oxidative deamination to produce ammonia and the pyruvoyl prosthetic group on the alpha chain.

It is found in the cell membrane. The enzyme catalyses a 1,2-diacyl-sn-glycero-3-phospho-L-serine + H(+) = a 1,2-diacyl-sn-glycero-3-phosphoethanolamine + CO2. It functions in the pathway phospholipid metabolism; phosphatidylethanolamine biosynthesis; phosphatidylethanolamine from CDP-diacylglycerol: step 2/2. Catalyzes the formation of phosphatidylethanolamine (PtdEtn) from phosphatidylserine (PtdSer). The polypeptide is Phosphatidylserine decarboxylase proenzyme (Rhizobium leguminosarum bv. trifolii (strain WSM2304)).